Reading from the N-terminus, the 291-residue chain is Popeye domain-containing protein 3 (291 aa).

N4 carries an N-linked (GlcNAc...) asparagine glycan. Transmembrane regions (helical) follow at residues 27 to 44, 48 to 70, and 77 to 99; these read GAIY…FMGG, FGLL…WAWV, and IFSW…AYQV.

Belongs to the popeye family. Expressed predominantly in skeletal muscle (at protein level). Also detected in heart.

Its subcellular location is the membrane. In terms of biological role, may play a role in the maintenance of heart function mediated, at least in part, through cAMP-binding. May play a role in the regulation of KCNK2/TREK-1-mediated current amplitude. The polypeptide is Popeye domain-containing protein 3 (POPDC3) (Homo sapiens (Human)).